Reading from the N-terminus, the 241-residue chain is Triosephosphate isomerase (241 aa).

9 to 11 serves as a coordination point for substrate; it reads NWK. His96 serves as the catalytic Electrophile. Catalysis depends on Glu165, which acts as the Proton acceptor. Residues Gly171, Ser204, and 225–226 each bind substrate; that span reads GG.

The protein belongs to the triosephosphate isomerase family. As to quaternary structure, homodimer.

The protein localises to the cytoplasm. The enzyme catalyses D-glyceraldehyde 3-phosphate = dihydroxyacetone phosphate. Its pathway is carbohydrate biosynthesis; gluconeogenesis. The protein operates within carbohydrate degradation; glycolysis; D-glyceraldehyde 3-phosphate from glycerone phosphate: step 1/1. Involved in the gluconeogenesis. Catalyzes stereospecifically the conversion of dihydroxyacetone phosphate (DHAP) to D-glyceraldehyde-3-phosphate (G3P). The sequence is that of Triosephosphate isomerase from Trichormus variabilis (strain ATCC 29413 / PCC 7937) (Anabaena variabilis).